The sequence spans 227 residues: Cytidylate kinase (227 aa).

12–20 (GPSGAGKGT) is a binding site for ATP.

This sequence belongs to the cytidylate kinase family. Type 1 subfamily.

It localises to the cytoplasm. It carries out the reaction CMP + ATP = CDP + ADP. It catalyses the reaction dCMP + ATP = dCDP + ADP. This Salmonella paratyphi B (strain ATCC BAA-1250 / SPB7) protein is Cytidylate kinase.